The following is a 218-amino-acid chain: Probable GTP-binding protein EngB (218 aa).

The region spanning 21–192 is the EngB-type G domain; sequence NAPQIALAGR…WQELHRLAFP (172 aa). Residues 29 to 36, 56 to 60, 75 to 78, 142 to 145, and 171 to 173 each bind GTP; these read GRSNVGKS, GKTRS, DLPG, TKAD, and FSS. Positions 36 and 58 each coordinate Mg(2+). The tract at residues 194–218 is disordered; that stretch reads MAFDTPSDGAPEPADEPEAASERAE.

It belongs to the TRAFAC class TrmE-Era-EngA-EngB-Septin-like GTPase superfamily. EngB GTPase family. Mg(2+) serves as cofactor.

In terms of biological role, necessary for normal cell division and for the maintenance of normal septation. This is Probable GTP-binding protein EngB from Oleidesulfovibrio alaskensis (strain ATCC BAA-1058 / DSM 17464 / G20) (Desulfovibrio alaskensis).